Consider the following 126-residue polypeptide: Adenosine 5'-monophosphoramidase HINT1 (126 aa).

An N-acetylalanine modification is found at Ala2. The HIT domain occupies 18–126 (IFGKIIRKEI…GGRQMNWPPG (109 aa)). An N6-acetyllysine mark is found at Lys21 and Lys30. An AMP-binding site is contributed by 43 to 44 (DI). Ser45 and Ser72 each carry phosphoserine. AMP-binding positions include Asn99, 105 to 107 (GQS), and 112 to 114 (HLH). Positions 110–114 (HIHLH) match the Histidine triad motif motif. His112 (tele-AMP-histidine intermediate) is an active-site residue.

The protein belongs to the HINT family. In terms of assembly, homodimer. Interacts with CDK7. Interacts with RUVBL1 and RUVBL2 and is associated with the LEF1/TCF1-CTNNB1 complex and with a KAT5 histone acetyltransferase complex. Identified in a complex with MITF and CTNNB1. Interacts with CDC34 and RBX1, and is part of a SCF (SKP2-CUL1-F-box protein) E3 ubiquitin-protein ligase complex. Interacts with SUMO1, SUMO2 and RGS17. Interacts with the Ten-1 ICD form of TENM1. Interacts with CALM1; interaction increases in the presence of calcium ions.

It localises to the cytoplasm. The protein localises to the nucleus. It carries out the reaction adenosine 5'-phosphoramidate + H2O = AMP + NH4(+). In terms of biological role, exhibits adenosine 5'-monophosphoramidase activity, hydrolyzing purine nucleotide phosphoramidates with a single phosphate group such as adenosine 5'monophosphoramidate (AMP-NH2) to yield AMP and NH2. Hydrolyzes adenosine 5'monophosphomorpholidate (AMP-morpholidate) and guanosine 5'monophosphomorpholidate (GMP-morpholidate). Hydrolyzes lysyl-AMP (AMP-N-epsilon-(N-alpha-acetyl lysine methyl ester)) generated by lysine tRNA ligase, as well as Met-AMP, His-AMP and Asp-AMP, lysyl-GMP (GMP-N-epsilon-(N-alpha-acetyl lysine methyl ester)) and AMP-N-alanine methyl ester. Can also convert adenosine 5'-O-phosphorothioate and guanosine 5'-O-phosphorothioate to the corresponding nucleoside 5'-O-phosphates with concomitant release of hydrogen sulfide. In addition, functions as a scaffolding protein that modulates transcriptional activation by the LEF1/TCF1-CTNNB1 complex and by the complex formed with MITF and CTNNB1. Modulates p53/TP53 levels and p53/TP53-mediated apoptosis. Modulates proteasomal degradation of target proteins by the SCF (SKP2-CUL1-F-box protein) E3 ubiquitin-protein ligase complex. Also exhibits SUMO-specific isopeptidase activity, deconjugating SUMO1 from RANGAP1 and RGS17. This chain is Adenosine 5'-monophosphoramidase HINT1 (Hint1), found in Rattus norvegicus (Rat).